The chain runs to 554 residues: Valerianol synthase TPS1F (554 aa).

Positions 307 and 311 each coordinate Mg(2+). Residues 326–330 carry the DDXXD motif motif; sequence VQRWD. Mg(2+)-binding residues include aspartate 452, serine 456, and glutamate 460.

It belongs to the terpene synthase family. Mg(2+) serves as cofactor.

It catalyses the reaction (2E,6E)-farnesyl diphosphate + H2O = valerianol + diphosphate. It functions in the pathway secondary metabolite biosynthesis; terpenoid biosynthesis. Functionally, terpene synthase that catalyzes the biosynthesis of the terpene valerianol, which is a volatile compound of floral scent. This Camellia hiemalis (Camellia) protein is Valerianol synthase TPS1F.